A 542-amino-acid polypeptide reads, in one-letter code: Tripartite motif-containing protein 26 (542 aa).

The segment at 16-57 (CSICLDYLRDPVTIDCGHVFCRSCTSDIRPISGNRPVCPLCK) adopts an RING-type zinc-finger fold. Residues 97–138 (QDMKLCERHQEKLHYYCEDDGKLLCVMCRESREHRPHTAVLV) form a B box-type zinc finger. Zn(2+) is bound by residues cysteine 102, histidine 105, cysteine 124, and histidine 130. Residues 197 to 243 (QFLKKREQHLLDQLATLEQLLTEGREKFKTRGVSELDRLTLVISELE) adopt a coiled-coil conformation. The B30.2/SPRY domain occupies 298-542 (RGLRQFQGKL…WPEARLLLRP (245 aa)). A disordered region spans residues 379–440 (REGWSEDEEE…EEEEEVQESC (62 aa)). Acidic residues-rich tracts occupy residues 383–405 (SEDEEEGEEEEEGEEEEEDEEPG) and 413–437 (WETDEEDESLGEEEEEEEEEEEEVQ). A coiled-coil region spans residues 411-440 (EDWETDEEDESLGEEEEEEEEEEEEVQESC).

This sequence belongs to the TRIM/RBCC family. Interacts with TBK1; this interaction bridges together TBK1 and NEMO in order to activate TBK1. Interacts with INCA1. Autoubiquitinates upon viral infection. In turn, autoubiquitinated TRIM26 recruits NEMO and bridges TBK1-NEMO interaction.

The protein resides in the cytoplasm. It is found in the nucleus. The catalysed reaction is S-ubiquitinyl-[E2 ubiquitin-conjugating enzyme]-L-cysteine + [acceptor protein]-L-lysine = [E2 ubiquitin-conjugating enzyme]-L-cysteine + N(6)-ubiquitinyl-[acceptor protein]-L-lysine.. In terms of biological role, E3 ubiquitin-protein ligase which regulates the IFN-beta production and antiviral response downstream of various DNA-encoded pattern-recognition receptors (PRRs). Also plays a central role in determining the response to different forms of oxidative stress by controlling levels of DNA glycosylases NEIL1, NEIL3 and NTH1 that are involved in repair of damaged DNA. Promotes nuclear IRF3 ubiquitination and proteasomal degradation. Bridges together TBK1 and NEMO during the innate response to viral infection leading to the activation of TBK1. Positively regulates LPS-mediated inflammatory innate immune response by catalyzing the 'Lys-11'-linked polyubiquitination of TAB1 to enhance its activation and subsequent NF-kappa-B and MAPK signaling. In a manner independent of its catalytic activity, inhibits WWP2, a SOX2-directed E3 ubiquitin ligase, and thus protects SOX2 from polyubiquitination and proteasomal degradation. Ubiquitinates the histone acetyltransferase protein complex component PHF20 and thereby triggers its degradation in the nucleus after its recruitment by the histone demethylase KDM6B, serving as a scaffold protein. Upon induction by TGF-beta, ubiquitinates the TFIID component TAF7 for proteasomal degradation. Induces ferroptosis by ubiquitinating SLC7A11, a critical protein for lipid reactive oxygen species (ROS) scavenging. The polypeptide is Tripartite motif-containing protein 26 (Trim26) (Rattus norvegicus (Rat)).